Reading from the N-terminus, the 224-residue chain is 4'-phosphopantetheinyl transferase ffp (224 aa).

Mg(2+)-binding residues include D107, E109, and E151. The interval 158–189 (GKGLSLPLDSFSVRLHEDGRVSVELPEHHTPC) is peptidyl carrier protein binding.

This sequence belongs to the P-Pant transferase superfamily. Gsp/Sfp/HetI/AcpT family. Requires Mg(2+) as cofactor.

The catalysed reaction is apo-[peptidyl-carrier protein] + CoA = holo-[peptidyl-carrier protein] + adenosine 3',5'-bisphosphate + H(+). May activate the peptidyl carrier protein (PCP) domains of fengycin synthase by transferring the 4'-phosphopantetheinyl moiety of coenzyme A (CoA) to a serine residue. This is 4'-phosphopantetheinyl transferase ffp (ffp) from Bacillus subtilis.